We begin with the raw amino-acid sequence, 525 residues long: Cobyric acid synthase (525 aa).

Positions 251-452 constitute a GATase cobBQ-type domain; it reads ELEIAVLYLP…FHGIFDNDLL (202 aa). The Nucleophile role is filled by Cys-332. His-444 is a catalytic residue.

This sequence belongs to the CobB/CobQ family. CobQ subfamily.

Its pathway is cofactor biosynthesis; adenosylcobalamin biosynthesis. Catalyzes amidations at positions B, D, E, and G on adenosylcobyrinic A,C-diamide. NH(2) groups are provided by glutamine, and one molecule of ATP is hydrogenolyzed for each amidation. This chain is Cobyric acid synthase, found in Pelotomaculum thermopropionicum (strain DSM 13744 / JCM 10971 / SI).